Here is a 187-residue protein sequence, read N- to C-terminus: Troponin I, slow skeletal muscle (187 aa).

Pro2 bears the N-acetylproline mark. The involved in binding TNC stretch occupies residues 2–48 (PEVERKSKITASRKLMLKSLMLAKAKECWEQEHEEREAEKVRYLSER). Position 58 is a phosphoserine (Ser58). Positions 97 to 118 (LKLKVLDLRGKFKRPPLRRVRV) are involved in binding TNC and actin.

The protein belongs to the troponin I family. In terms of assembly, binds to actin and tropomyosin.

Troponin I is the inhibitory subunit of troponin, the thin filament regulatory complex which confers calcium-sensitivity to striated muscle actomyosin ATPase activity. The polypeptide is Troponin I, slow skeletal muscle (Tnni1) (Mus musculus (Mouse)).